Reading from the N-terminus, the 617-residue chain is Proline--tRNA ligase (617 aa).

It belongs to the class-II aminoacyl-tRNA synthetase family. ProS type 1 subfamily. Homodimer.

Its subcellular location is the cytoplasm. It carries out the reaction tRNA(Pro) + L-proline + ATP = L-prolyl-tRNA(Pro) + AMP + diphosphate. Its function is as follows. Catalyzes the attachment of proline to tRNA(Pro) in a two-step reaction: proline is first activated by ATP to form Pro-AMP and then transferred to the acceptor end of tRNA(Pro). As ProRS can inadvertently accommodate and process non-cognate amino acids such as alanine and cysteine, to avoid such errors it has two additional distinct editing activities against alanine. One activity is designated as 'pretransfer' editing and involves the tRNA(Pro)-independent hydrolysis of activated Ala-AMP. The other activity is designated 'posttransfer' editing and involves deacylation of mischarged Ala-tRNA(Pro). The misacylated Cys-tRNA(Pro) is not edited by ProRS. This is Proline--tRNA ligase from Streptococcus pneumoniae (strain CGSP14).